The sequence spans 317 residues: L-lactate dehydrogenase 1 (317 aa).

NAD(+)-binding positions include Val17, Asp38, Lys43, Tyr69, and 83-84 (GA). Residues Gln86 and Arg92 each contribute to the substrate site. NAD(+) contacts are provided by residues Ser105, 122-124 (ATN), and Ser147. Residue 124–127 (NPVD) participates in substrate binding. 152 to 155 (DSAR) serves as a coordination point for substrate. His179 serves as the catalytic Proton acceptor. Tyr223 is modified (phosphotyrosine). A substrate-binding site is contributed by Thr232.

Belongs to the LDH/MDH superfamily. LDH family. Homotetramer.

The protein resides in the cytoplasm. The catalysed reaction is (S)-lactate + NAD(+) = pyruvate + NADH + H(+). It functions in the pathway fermentation; pyruvate fermentation to lactate; (S)-lactate from pyruvate: step 1/1. In terms of biological role, catalyzes the conversion of lactate to pyruvate (Potential). Appears to be the primary factor that allows S.aureus growth during nitrosative stress in both aerobically and anaerobically cultured cells. In Staphylococcus aureus (strain USA300), this protein is L-lactate dehydrogenase 1.